We begin with the raw amino-acid sequence, 762 residues long: Probable inorganic carbon transporter subunit DabA (762 aa).

Zn(2+)-binding residues include cysteine 279, aspartate 281, histidine 461, and cysteine 476.

Belongs to the inorganic carbon transporter (TC 9.A.2) DabA family. In terms of assembly, forms a complex with DabB. It depends on Zn(2+) as a cofactor.

The protein localises to the cell inner membrane. Part of an energy-coupled inorganic carbon pump. The polypeptide is Probable inorganic carbon transporter subunit DabA (Legionella pneumophila subsp. pneumophila (strain Philadelphia 1 / ATCC 33152 / DSM 7513)).